The following is a 392-amino-acid chain: Sex-determining region Y protein (392 aa).

A sufficient for interaction with KPNB1 region spans residues H4–K81. Positions V5 to K73 form a DNA-binding region, HMG box. 2 required for nuclear localization regions span residues K6 to K22 and Q75 to K81. The tract at residues R52–Q84 is sufficient for interaction with EP300. At K81 the chain carries N6-acetyllysine. Residues A92 to Q144 are necessary for interaction with ZNF208 isoform KRAB-O. Residues A94–I138 are necessary for interaction with SLC9A3R2 and nuclear accumulation of SLC9A3R2. The segment at H142–Q361 is disordered. Residues Q144–Q181 are compositionally biased toward low complexity. 2 stretches are compositionally biased toward basic and acidic residues: residues F182 to Q197 and Q210 to Q228. The segment covering Q229 to Q238 has biased composition (low complexity). Composition is skewed to basic and acidic residues over residues F239–H250, F261–P295, and Q313–Q349. The segment covering Q350–Q361 has biased composition (low complexity).

It belongs to the SRY family. Interacts with KPNB1, ZNF208 isoform KRAB-O, PARP1 and SLC9A3R2. The interaction with KPNB1 is sensitive to dissociation by Ran in the GTP-bound form. Interaction with PARP1 impaired its DNA-binding activity. Interacts with CALM, EP300, HDAC3 and WT1. The interaction with EP300 modulates its DNA-binding activity. In terms of processing, degraded due to the presence of a degron at the C-terminus that promotes its degradation. Post-translationally, phosphorylated on serine residues by PKA. Phosphorylation by PKA enhances its DNA-binding activity and stimulates transcription repression. Acetylation of Lys-81 contributes to its nuclear localization and enhances its interaction with KPNB1. In terms of processing, poly-ADP-ribosylated by PARP1. ADP-ribosylation reduces its DNA-binding activity. In terms of tissue distribution, expressed in gonadal somatic pre-Sertoli cells. Expressed in the substantia nigra of the brain (at protein level). Expressed in diencephalon, cortex, the substantia nigra of the midbrain and the medial mammillary bodies of the hypothalamus of male, but not female. Expressed in gonadal somatic pre-Sertoli cells. While it is expressed at lower level compared to isoform Sry-S, this form is more stable and constitutes the predominant protein product of the Sry locus in XY gonads (at protein level).

Its subcellular location is the nucleus speckle. The protein localises to the cytoplasm. It is found in the nucleus. Transcriptional regulator that controls a genetic switch in male development. It is necessary and sufficient for initiating male sex determination by directing the development of supporting cell precursors (pre-Sertoli cells) as Sertoli rather than granulosa cells. Involved in different aspects of gene regulation including promoter activation or repression. Binds to the DNA consensus sequence 5'-[AT]AACAA[AT]-3'. SRY HMG box recognizes DNA by partial intercalation in the minor groove and promotes DNA bending. Also involved in pre-mRNA splicing. In male adult brain involved in the maintenance of motor functions of dopaminergic neurons. In terms of biological role, constitutes the major isoform, which is necessary and sufficient for initiating male sex determination. Functionally, constitutes a minor isoform, which is unstable due to the presence of a degron at the C-terminus that promotes its degradation. Not necessary and sufficient for initiating male sex determination. The protein is Sex-determining region Y protein of Mus musculus (Mouse).